A 314-amino-acid polypeptide reads, in one-letter code: DNA-directed RNA polymerase subunit alpha (314 aa).

An alpha N-terminal domain (alpha-NTD) region spans residues 1 to 228 (MIEIEKPKIE…EHLNIFVGLT (228 aa)). The interval 245–314 (KEKVLEMTIE…ELGLGLRKDD (70 aa)) is alpha C-terminal domain (alpha-CTD).

This sequence belongs to the RNA polymerase alpha chain family. Homodimer. The RNAP catalytic core consists of 2 alpha, 1 beta, 1 beta' and 1 omega subunit. When a sigma factor is associated with the core the holoenzyme is formed, which can initiate transcription.

It carries out the reaction RNA(n) + a ribonucleoside 5'-triphosphate = RNA(n+1) + diphosphate. Functionally, DNA-dependent RNA polymerase catalyzes the transcription of DNA into RNA using the four ribonucleoside triphosphates as substrates. The protein is DNA-directed RNA polymerase subunit alpha of Bacillus thuringiensis (strain Al Hakam).